Consider the following 401-residue polypeptide: S-adenosylmethionine synthase (401 aa).

Histidine 15 provides a ligand contact to ATP. Position 17 (aspartate 17) interacts with Mg(2+). Glutamate 48 contributes to the K(+) binding site. Residues glutamate 61 and glutamine 104 each coordinate L-methionine. Residues 104 to 114 (QSPDIALGVDR) form a flexible loop region. ATP contacts are provided by residues 179–181 (DGK), 246–247 (RF), aspartate 255, 261–262 (RK), alanine 278, and lysine 282. Aspartate 255 is a binding site for L-methionine. Lysine 286 provides a ligand contact to L-methionine.

It belongs to the AdoMet synthase family. In terms of assembly, homotetramer; dimer of dimers. Mg(2+) serves as cofactor. The cofactor is K(+).

The protein resides in the cytoplasm. The catalysed reaction is L-methionine + ATP + H2O = S-adenosyl-L-methionine + phosphate + diphosphate. It functions in the pathway amino-acid biosynthesis; S-adenosyl-L-methionine biosynthesis; S-adenosyl-L-methionine from L-methionine: step 1/1. Its function is as follows. Catalyzes the formation of S-adenosylmethionine (AdoMet) from methionine and ATP. The overall synthetic reaction is composed of two sequential steps, AdoMet formation and the subsequent tripolyphosphate hydrolysis which occurs prior to release of AdoMet from the enzyme. The sequence is that of S-adenosylmethionine synthase from Petrotoga mobilis (strain DSM 10674 / SJ95).